The sequence spans 350 residues: MSGNTFGQIFKVTTYGESHGPGLGGVIDGCPAGIELSEEIIQLELDRRKPGQGIASTARKEADRVKILSGVFEGRTTGTSIGFHIENTDQRSHDYSKIMNVYRPGHADRTFDAKYGFRDYRGGGRSSGRETVSRVAGGAVAQEFLRQQSISCQAYTVRIGGIDGEVKAPEKAHELPFFSADPDVIPSWEERIKEVRSQGDTLGGVVEVCIKGVPAGLGEPVFDKLDARLAYALMSVGAVKGVEIGAGCKAADALGSENNDFMDGDGFCSNNAGGVLGGISSGQDVVVRAYVKPIPSISKPQQTVDRDGNATEIKIGGRHDICAIPRIVPVLKSMAMLTVADFILLQRRMG.

Arg-48 contacts NADP(+). FMN contacts are provided by residues 125–127, Gly-277, 292–296, and Arg-318; these read RSS and KPIPS.

The protein belongs to the chorismate synthase family. In terms of assembly, homotetramer. FMNH2 is required as a cofactor.

The enzyme catalyses 5-O-(1-carboxyvinyl)-3-phosphoshikimate = chorismate + phosphate. It participates in metabolic intermediate biosynthesis; chorismate biosynthesis; chorismate from D-erythrose 4-phosphate and phosphoenolpyruvate: step 7/7. Functionally, catalyzes the anti-1,4-elimination of the C-3 phosphate and the C-6 proR hydrogen from 5-enolpyruvylshikimate-3-phosphate (EPSP) to yield chorismate, which is the branch point compound that serves as the starting substrate for the three terminal pathways of aromatic amino acid biosynthesis. This reaction introduces a second double bond into the aromatic ring system. The sequence is that of Chorismate synthase from Maridesulfovibrio salexigens (strain ATCC 14822 / DSM 2638 / NCIMB 8403 / VKM B-1763) (Desulfovibrio salexigens).